A 372-amino-acid polypeptide reads, in one-letter code: Monocyte differentiation antigen CD14 (372 aa).

The N-terminal stretch at 1 to 17 is a signal peptide; the sequence is MEPVPCLLLLLLPLLRA. Cystine bridges form between Cys-25–Cys-36 and Cys-34–Cys-51. Asn-37 carries N-linked (GlcNAc...) asparagine glycosylation. 11 LRR repeats span residues 54-82, 83-118, 119-145, 146-173, 174-197, 198-225, 226-252, 253-275, 276-296, 297-318, and 319-346; these read AVQVEMWGGGHSLEQFLRQADLYTDQRRY, ADVVKALRVRRLTVGAVQVPAPLLLGVLRVLGYSRL, KELALEDIEVTGTAPPPPPLEATGPAL, STLSLRNVSWPKGGAWLSELQQWLKPGL, QVLNIAQAHTLAFSCEQVRTFSAL, TTLDLSENPGLGERGLVAALCPHKFPAL, QDLALRNAGMKTLQGVCAALAEAGVQP, HHLDLSHNSLRADTQRCIWPSAL, NSLNLSFTGLQQVPKGLPAKL, NVLDLSCNKLNRAPQPGELPKV, and VNLSLDGNPFLVPGASKLQEDLTNSGVF. N-linked (GlcNAc...) asparagine glycosylation is present at Asn-152. 2 cysteine pairs are disulfide-bonded: Cys-188/Cys-218 and Cys-242/Cys-269. N-linked (GlcNAc...) asparagine glycosylation is present at Asn-279. Positions 287–372 are required for response to bacterial lipopolysaccharide (LPS); it reads QVPKGLPAKL…ALLQGARGFI (86 aa). Asn-320 carries an N-linked (GlcNAc...) asparagine glycan. Asn-342 carries GPI-anchor amidated asparagine lipidation. A propeptide spans 343 to 372 (removed in mature form); it reads SGVFPACPPSPLAMGMSGTLALLQGARGFI.

In terms of assembly, belongs to the lipopolysaccharide (LPS) receptor, a multi-protein complex containing at least CD14, LY96 and TLR4. Interacts with LPS-bound LPB. Interacts with LPAR1. Interacts with the TLR2:TLR6 or TLR2:TLR1 heterodimers; upon interaction with ligands such as diacylated lipopeptides and triacylated lipopeptides, respectively. Interacts with MYO18A. Interacts with FSTL1.

It localises to the cell membrane. It is found in the secreted. The protein resides in the membrane raft. Its subcellular location is the golgi apparatus. Its function is as follows. Coreceptor for bacterial lipopolysaccharide. In concert with LBP, binds to monomeric lipopolysaccharide and delivers it to the LY96/TLR4 complex, thereby mediating the innate immune response to bacterial lipopolysaccharide (LPS). Acts via MyD88, TIRAP and TRAF6, leading to NF-kappa-B activation, cytokine secretion and the inflammatory response. Acts as a coreceptor for TLR2:TLR6 heterodimer in response to diacylated lipopeptides and for TLR2:TLR1 heterodimer in response to triacylated lipopeptides, these clusters trigger signaling from the cell surface and subsequently are targeted to the Golgi in a lipid-raft dependent pathway. Binds electronegative LDL (LDL(-)) and mediates the cytokine release induced by LDL(-). In Oryctolagus cuniculus (Rabbit), this protein is Monocyte differentiation antigen CD14 (CD14).